The chain runs to 225 residues: tRNA (guanine-N(1)-)-methyltransferase (225 aa).

S-adenosyl-L-methionine-binding positions include G112 and 132–137 (IGDYVL).

It belongs to the RNA methyltransferase TrmD family. Homodimer.

Its subcellular location is the cytoplasm. It carries out the reaction guanosine(37) in tRNA + S-adenosyl-L-methionine = N(1)-methylguanosine(37) in tRNA + S-adenosyl-L-homocysteine + H(+). In terms of biological role, specifically methylates guanosine-37 in various tRNAs. This Bacteroides thetaiotaomicron (strain ATCC 29148 / DSM 2079 / JCM 5827 / CCUG 10774 / NCTC 10582 / VPI-5482 / E50) protein is tRNA (guanine-N(1)-)-methyltransferase.